Consider the following 67-residue polypeptide: Large ribosomal subunit protein bL32 (67 aa).

Residues 1 to 19 (MAVPKRKMSRSNTRSRRSQ) show a composition bias toward basic residues. Residues 1-22 (MAVPKRKMSRSNTRSRRSQWKA) form a disordered region.

Belongs to the bacterial ribosomal protein bL32 family.

The protein is Large ribosomal subunit protein bL32 of Kineococcus radiotolerans (strain ATCC BAA-149 / DSM 14245 / SRS30216).